The sequence spans 198 residues: Recombination protein RecR (198 aa).

The C4-type zinc finger occupies 58–73 (CSICGNFTDSDPCAIC). Residues 81-175 (SIICVIEEPK…KVTRIAHGIP (95 aa)) enclose the Toprim domain.

This sequence belongs to the RecR family.

In terms of biological role, may play a role in DNA repair. It seems to be involved in an RecBC-independent recombinational process of DNA repair. It may act with RecF and RecO. The protein is Recombination protein RecR of Clostridium kluyveri (strain NBRC 12016).